The chain runs to 336 residues: Cytosolic 5'-nucleotidase 3A (336 aa).

The active-site Nucleophile is Asp-88. 2 residues coordinate Mg(2+): Asp-88 and Asp-90. Asp-90 (proton donor) is an active-site residue. A CMP-binding site is contributed by Glu-135. Positions 135 and 156 each coordinate N(7)-methyl-GMP. Residues 203-204 (SA) and Lys-252 contribute to the substrate site. Asp-277 lines the Mg(2+) pocket. Phosphoserine is present on Ser-278.

It belongs to the pyrimidine 5'-nucleotidase family. In terms of assembly, monomer. Isoforms 1, 3 and 4 are expressed in reticulocytes. Isoform 4 is hardly detectable in bone marrow and fetal liver.

The protein localises to the cytoplasm. The protein resides in the endoplasmic reticulum. It catalyses the reaction N(7)-methyl-GMP + H2O = N(7)-methylguanosine + phosphate. It carries out the reaction CMP + H2O = cytidine + phosphate. The catalysed reaction is a ribonucleoside 5'-phosphate + H2O = a ribonucleoside + phosphate. Its function is as follows. Nucleotidase which shows specific activity towards cytidine monophosphate (CMP) and 7-methylguanosine monophosphate (m(7)GMP). CMP seems to be the preferred substrate. This chain is Cytosolic 5'-nucleotidase 3A (NT5C3A), found in Homo sapiens (Human).